The primary structure comprises 196 residues: Crossover junction endodeoxyribonuclease RuvC (196 aa).

Catalysis depends on residues Asp23, Glu83, and His156. Positions 23, 83, and 156 each coordinate Mg(2+).

The protein belongs to the RuvC family. Homodimer which binds Holliday junction (HJ) DNA. The HJ becomes 2-fold symmetrical on binding to RuvC with unstacked arms; it has a different conformation from HJ DNA in complex with RuvA. In the full resolvosome a probable DNA-RuvA(4)-RuvB(12)-RuvC(2) complex forms which resolves the HJ. Mg(2+) is required as a cofactor.

The protein localises to the cytoplasm. The catalysed reaction is Endonucleolytic cleavage at a junction such as a reciprocal single-stranded crossover between two homologous DNA duplexes (Holliday junction).. Functionally, the RuvA-RuvB-RuvC complex processes Holliday junction (HJ) DNA during genetic recombination and DNA repair. Endonuclease that resolves HJ intermediates. Cleaves cruciform DNA by making single-stranded nicks across the HJ at symmetrical positions within the homologous arms, yielding a 5'-phosphate and a 3'-hydroxyl group; requires a central core of homology in the junction. The consensus cleavage sequence is 5'-(A/T)TT(C/G)-3'. Cleavage occurs on the 3'-side of the TT dinucleotide at the point of strand exchange. HJ branch migration catalyzed by RuvA-RuvB allows RuvC to scan DNA until it finds its consensus sequence, where it cleaves and resolves the cruciform DNA. The protein is Crossover junction endodeoxyribonuclease RuvC of Treponema pallidum (strain Nichols).